Reading from the N-terminus, the 434-residue chain is Alpha-enolase (434 aa).

A Mg(2+)-binding site is contributed by S40. Positions 158 and 167 each coordinate substrate. E210 (proton donor) is an active-site residue. 3 residues coordinate Mg(2+): D245, E293, and D318. Residues E293 and D318 each coordinate substrate. K343 serves as the catalytic Proton acceptor. Residues 370 to 373 (SHRS) and K394 contribute to the substrate site.

Belongs to the enolase family. In terms of assembly, homodimer. Requires Mg(2+) as cofactor.

The protein resides in the cytoplasm. The enzyme catalyses (2R)-2-phosphoglycerate = phosphoenolpyruvate + H2O. Its pathway is carbohydrate degradation; glycolysis; pyruvate from D-glyceraldehyde 3-phosphate: step 4/5. The polypeptide is Alpha-enolase (Python regius (Ball python)).